The chain runs to 170 residues: Bifunctional protein PyrR (170 aa).

Positions 90–102 (LVLIDDVLMSGRT) match the PRPP-binding motif.

It belongs to the purine/pyrimidine phosphoribosyltransferase family. PyrR subfamily.

It carries out the reaction UMP + diphosphate = 5-phospho-alpha-D-ribose 1-diphosphate + uracil. Functionally, regulates the transcription of the pyrimidine nucleotide (pyr) operon in response to exogenous pyrimidines. Its function is as follows. Also displays a weak uracil phosphoribosyltransferase activity which is not physiologically significant. The protein is Bifunctional protein PyrR of Pseudomonas syringae pv. syringae (strain B728a).